A 1381-amino-acid chain; its full sequence is MMSLRLFSILLAAVVSGAQGWGYYGCNEELVGPLYARSLGASSYYGLFTTARFARLHGISGWSPRIGDPNPWLQIDLMKKHRIRAVATQGAFNSWDWVTRYMLLYGDRVDSWTPFYQQGHNATFFGNVNDSAVVRHDLHYHFTARYIRIVPLAWNPRGKIGLRLGIYGCPYTSNILYFDGDDAISYRFQRGASQSLWDVFAFSFKTEEKDGLLLHTEGSQGDYVTLELQGAHLLLHMSLGSSPIQPRPGHTTVSAGGVLNDLSWHYVRVDRYGREANLTLDGYVHRFVLNGDFERLNLENEIFIGGLVGAARKNLAYRHNFRGCIENVIYNRINIAEMAVQRHSRITFEGNVAFRCLDPVPHPINFGGPHNFVQVPGFPRRGRLAVSFRFRTWDLTGLLLFSRLGDGLGHVELMLSEGQVNVSIAQTGRKKLQFAAGYRLNDGFWHEVNFVAQENHAVISIDDVEGAEVRVSYPLLIRTGTSYFFGGCPKPASRWGCHSNQTAFHGCMELLKVDGQLVNLTLVEFRKLGYFAEVLFDTCGITDRCSPNMCEHDGRCYQSWDDFICYCELTGYKGVTCHEPLYKESCEAYRLSGKYSGNYTIDPDGSGPLKPFVVYCDIRENRAWTVVRHDRLWTTRVTGSSMDRPFLGAIQYWNASWEEVSALANASQHCEQWIEFSCYNSRLLNTAGGYPYSFWIGRNEEQHFYWGGSQPGIQRCACGLDQSCIDPALHCNCDADQPQWRTDKGLLTFVDHLPVTQVVIGDTNRSSSEAQFFLRPLRCYGDRNSWNTISFRTGAALRFPPIRANHSLDVSFYFRTSAPSGVFLENMGGPFCQWRRPYVRVELNTSRDVVFAFDIGNGDENLTVHSDDFEFNDDEWHLVRAEINVKQARLRVDHRPWVLRPMPLQTYIWLEYDQPLYVGSAELKRRPFVGCLRAMRLNGVTLNLEGRANASEGTFPNCTGHCTHPRFPCFHGGRCVERYSYYTCDCDLTAFDGPYCNHDIGGFFETGTWMRYNLQSALRSAAQEFSHMLSRPVPGYEPGYIPGYDTPGYVPGYHGPGYRLPDYPRPGRPVPGYRGPVYNVTGEEVSFSFSTSSAPAVLLYVSSFVRDYMAVLIKEDGTLQLRYQLGTSPYVYQLTTRPVTDGQPHSVNITRVYRNLFIQVDYFPLTEQKFSLLVDSQLDSPKALYLGRVMETGVIDPEIQRYNTPGFSGCLSGVRFNNVAPLKTHFRTPRPMTAELAEAMRVQGELSESNCGAMPRLVSEVPPELDPWYLPPDFPYYHDDGWIAILLGFLVAFLLLGLVGMLVLFYLQNHRYKGSYHTNEPKATHDSHPGGKAPLPPSGPAQAPAPTPAPTQVPTPAPAPASGPGPRDQNLPQILEESRSE.

Residues 1 to 20 (MMSLRLFSILLAAVVSGAQG) form the signal peptide. At 21–1284 (WGYYGCNEEL…PYYHDDGWIA (1264 aa)) the chain is on the extracellular side. Residues 26–169 (CNEELVGPLY…IGLRLGIYGC (144 aa)) enclose the F5/8 type C domain. Cysteines 26 and 169 form a disulfide. Residues Asn121, Asn129, and Asn277 are each glycosylated (N-linked (GlcNAc...) asparagine). Laminin G-like domains are found at residues 204 to 356 (FKTE…AFRC) and 390 to 539 (FRTW…FDTC). Cys324 and Cys356 form a disulfide bridge. N-linked (GlcNAc...) asparagine glycosylation is found at Asn421, Asn500, and Asn519. Cystine bridges form between Cys507-Cys539, Cys545-Cys556, Cys550-Cys565, and Cys567-Cys577. Residues 544 to 576 (RCSPNMCEHDGRCYQSWDDFICYCELTGYKGVT) enclose the EGF-like 1 domain. The 220-residue stretch at 577–796 (CHEPLYKESC…NTISFRTGAA (220 aa)) folds into the Fibrinogen C-terminal domain. 9 N-linked (GlcNAc...) asparagine glycosylation sites follow: Asn598, Asn654, Asn665, Asn764, Asn805, Asn844, Asn861, Asn949, and Asn957. The Laminin G-like 3 domain maps to 814 to 958 (FRTSAPSGVF…NASEGTFPNC (145 aa)). Disulfide bonds link Cys931/Cys958, Cys962/Cys975, Cys969/Cys984, and Cys986/Cys996. In terms of domain architecture, EGF-like 2 spans 962-996 (CTHPRFPCFHGGRCVERYSYYTCDCDLTAFDGPYC). N-linked (GlcNAc...) asparagine glycans are attached at residues Asn1079 and Asn1148. The Laminin G-like 4 domain maps to 1089 to 1251 (FSTSSAPAVL…VQGELSESNC (163 aa)). The cysteines at positions 1210 and 1251 are disulfide-linked. A helical transmembrane segment spans residues 1285–1305 (ILLGFLVAFLLLGLVGMLVLF). Over 1306-1381 (YLQNHRYKGS…PQILEESRSE (76 aa)) the chain is Cytoplasmic. The interval 1317–1381 (HTNEPKATHD…PQILEESRSE (65 aa)) is disordered. Over residues 1319 to 1329 (NEPKATHDSHP) the composition is skewed to basic and acidic residues. The SH3-binding motif lies at 1329-1366 (PGGKAPLPPSGPAQAPAPTPAPTQVPTPAPAPASGPGP). A compositionally biased stretch (pro residues) spans 1334 to 1363 (PLPPSGPAQAPAPTPAPTQVPTPAPAPASG). Ser1380 carries the post-translational modification Phosphoserine.

It belongs to the neurexin family. In terms of assembly, interacts with CNTN1/contactin in cis form. Predominantly expressed in brain. In myelinated nerve fibers of the CNS predominantly found in paranodal axoglial junctions. In unmyelinated nerve fibers of the CNS diffusely distributed along the entire surface. Weak expression is detected in ovary, pancreas, colon, lung, heart, intestine and testis.

The protein resides in the membrane. Its subcellular location is the cell junction. The protein localises to the paranodal septate junction. In terms of biological role, required, with CNTNAP2, for radial and longitudinal organization of myelinated axons. Plays a role in the formation of functional distinct domains critical for saltatory conduction of nerve impulses in myelinated nerve fibers. Demarcates the paranodal region of the axo-glial junction. In association with contactin involved in the signaling between axons and myelinating glial cells. The chain is Contactin-associated protein 1 (Cntnap1) from Rattus norvegicus (Rat).